Consider the following 70-residue polypeptide: uncharacterized protein (70 aa).

A disordered region spans residues Leu-40–Ser-70. Residues Ser-51–Glu-61 are compositionally biased toward polar residues.

This is an uncharacterized protein from Bdellovibrio phage phiMH2K (Bacteriophage phiMH2K).